A 290-amino-acid chain; its full sequence is Putative beta-lactamase HcpC (290 aa).

The N-terminal stretch at Met1–Ala25 is a signal peptide. 7 TPR repeats span residues Pro29–Ser62, Cys64–Asn98, Cys100–Ala133, Glu134–Asp170, Cys172–Ser205, Pro206–Gly242, and Cys244–Gly278. Intrachain disulfides connect Cys56-Cys64, Cys92-Cys100, Cys128-Cys136, Cys164-Cys172, Cys200-Cys208, Cys236-Cys244, and Cys272-Cys280.

The protein belongs to the hcp beta-lactamase family.

The protein resides in the secreted. It catalyses the reaction a beta-lactam + H2O = a substituted beta-amino acid. In terms of biological role, may hydrolyze 6-aminopenicillinic acid and 7-aminocephalosporanic acid (ACA) derivatives. This chain is Putative beta-lactamase HcpC (hcpC), found in Helicobacter pylori (strain J99 / ATCC 700824) (Campylobacter pylori J99).